Here is a 271-residue protein sequence, read N- to C-terminus: Tryptophan synthase alpha chain (271 aa).

Active-site proton acceptor residues include Glu59 and Asp70.

The protein belongs to the TrpA family. In terms of assembly, tetramer of two alpha and two beta chains.

It carries out the reaction (1S,2R)-1-C-(indol-3-yl)glycerol 3-phosphate + L-serine = D-glyceraldehyde 3-phosphate + L-tryptophan + H2O. It functions in the pathway amino-acid biosynthesis; L-tryptophan biosynthesis; L-tryptophan from chorismate: step 5/5. In terms of biological role, the alpha subunit is responsible for the aldol cleavage of indoleglycerol phosphate to indole and glyceraldehyde 3-phosphate. The protein is Tryptophan synthase alpha chain of Methanosarcina mazei (strain ATCC BAA-159 / DSM 3647 / Goe1 / Go1 / JCM 11833 / OCM 88) (Methanosarcina frisia).